Consider the following 252-residue polypeptide: Movement protein (252 aa).

Residues 222–252 (YDGPYRPATTRPKSLLSSEDVKRASNKKNSS) are disordered.

Belongs to the tobamovirus movement protein family.

In terms of biological role, transports viral genome to neighboring plant cells directly through plasmosdesmata, without any budding. The movement protein allows efficient cell to cell propagation, by bypassing the host cell wall barrier. Displays RNA-binding activity. In Bidens pilosa (Hairy beggarticks), this protein is Movement protein.